We begin with the raw amino-acid sequence, 367 residues long: Alpha-2-HS-glycoprotein (367 aa).

The N-terminal stretch at 1–18 (MKSLVLLLCLAQLWGCHS) is a signal peptide. The 107-residue stretch at 27–133 (YRQPNCDDPE…KFSVVYAKCD (107 aa)) folds into the Cystatin fetuin-A-type 1 domain. Intrachain disulfides connect Cys-32-Cys-358, Cys-89-Cys-100, Cys-114-Cys-132, Cys-146-Cys-149, Cys-208-Cys-219, and Cys-230-Cys-247. A Phosphoserine modification is found at Ser-134. Phosphoserine; by FAM20C is present on residues Ser-135 and Ser-138. Residues 144 to 255 (KVCQDCPLLA…TCMVFQTQPV (112 aa)) form the Cystatin fetuin-A-type 2 domain. Asn-156 and Asn-176 each carry an N-linked (GlcNAc...) (complex) asparagine glycan. The disordered stretch occupies residues 255–298 (VSSQPQPEGANEAVPTPVVDPDAPPSPPLGAPGLPPAGSPPDSH). O-linked (GalNAc...) threonine glycosylation occurs at Thr-270. Over residues 276–293 (DAPPSPPLGAPGLPPAGS) the composition is skewed to pro residues. Ser-280 and Ser-293 each carry an O-linked (GalNAc...) serine glycan. A propeptide spans 301–340 (LAAPPGHQLHRAHYDLRHTFMGVVSLGSPSGEVSHPRKTR) (connecting peptide). The residue at position 319 (Thr-319) is a Phosphothreonine; by FAM20C. Residues Ser-325, Ser-328, and Ser-330 each carry the phosphoserine; by FAM20C modification. O-linked (GalNAc...) threonine glycans are attached at residues Thr-339 and Thr-341. Ser-346 is a glycosylation site (O-linked (GalNAc...) serine).

It belongs to the fetuin family. As to quaternary structure, alpha-2-HS glycoprotein derives from this precursor, when the connecting peptide is cleaved off. The two chains A and B are held together by a single disulfide bond. In terms of processing, phosphorylated by FAM20C in the extracellular medium. Post-translationally, O- and N-glycosylated. O-glycosylated with core 1 or possibly core 8 glycans. N-glycan at Asn-156: Hex5HexNAc4; N-glycan heterogeneity at Asn-176: Hex5HexNAc4 (major) and Hex6HexNAc5 (minor). In terms of tissue distribution, synthesized in liver and selectively concentrated in bone matrix. Secreted in plasma. It is also found in dentin in much higher quantities than other plasma proteins.

It localises to the secreted. In terms of biological role, promotes endocytosis, possesses opsonic properties and influences the mineral phase of bone. Shows affinity for calcium and barium ions. The protein is Alpha-2-HS-glycoprotein (AHSG) of Homo sapiens (Human).